The chain runs to 411 residues: MPETEHETCSKEWLQSQLRSLDSKDLILLDCRGSHEYSESHIRGAVNLCIPSIVLRRLAVGKIDLASTIKSPELKQRIQSGYKLCWFILYNGEGVPGQNQEIAGAGSLAVAMDSIISILHRRLKQDGCRVVALQDGFNNFRQAFPEWCEDDNQTHSKEIESSRNVQTDQLMGLRSLRISTTQSDSACSSSAESSDCESSSHHHHHHSHHNYNEAPVEIIPGLLFLGNATHSCDSEALKKYNIKYVLNVTPDLPNKFKESGDIKYLQIPITDHYSQDLAIHFPDAIQFIEEARSASSVVLVHCLAGVSRSVTVTLAYLMHTRGLSLNDAFAMVRDRKPDVSPNFHFMQQLLSFESQLRLRPGSRFSCSCIAPDCNCMQTTGFMATHLANATGVSPDSGIEFDRWTPSDTGLK.

The region spanning Asp-22–Glu-149 is the Rhodanese domain. Residues Asp-184 to Glu-197 are compositionally biased toward low complexity. A disordered region spans residues Asp-184 to His-209. Residues Ala-214–Leu-358 form the Tyrosine-protein phosphatase domain. The Phosphocysteine intermediate role is filled by Cys-302.

Belongs to the protein-tyrosine phosphatase family. Non-receptor class dual specificity subfamily. Interacts (via N-terminal region) with phosphorylated rl. In terms of tissue distribution, ubiquitous expression in eye and wing imaginal disks. Enriched in ovary.

Its subcellular location is the cytoplasm. It carries out the reaction O-phospho-L-tyrosyl-[protein] + H2O = L-tyrosyl-[protein] + phosphate. It catalyses the reaction O-phospho-L-seryl-[protein] + H2O = L-seryl-[protein] + phosphate. The catalysed reaction is O-phospho-L-threonyl-[protein] + H2O = L-threonyl-[protein] + phosphate. With respect to regulation, activity abolished by tyrosine phosphatase inhibitor sodium vanadate. Activated by rl. Negatively regulates the activity of members of the MAP kinase family in response to changes in the cellular environment. Has a specificity for the ERK family. Acts as a negative regulator in a variety of developmental processes including cell differentiation and proliferation controlled by the Ras/ERK pathway. Suppresses the photoreceptor cell differentiation and wing vein formation. Required for proper oogenesis and early embryogenesis. Functions autonomously in a subset of photoreceptor progenitor cells in eye imaginal disks. Also appears to be required in surrounding non-neuronal cells for ommatidial patterning and photoreceptor differentiation. Plays a role in the maintenance of epithelial integrity during tracheal development. The sequence is that of Dual specificity protein phosphatase Mpk3 (Mkp3) from Drosophila melanogaster (Fruit fly).